Reading from the N-terminus, the 487-residue chain is uncharacterized protein (487 aa).

2 ABC transporter domains span residues 5–249 (VKFA…IPVK) and 265–487 (ISME…VIHA). ATP is bound at residue 297–304 (GSNGSGKT).

This sequence belongs to the ABC transporter superfamily.

The protein resides in the mitochondrion. This is an uncharacterized protein from Schizosaccharomyces pombe (strain 972 / ATCC 24843) (Fission yeast).